The sequence spans 1315 residues: DNA-directed RNA polymerase subunit beta' (1315 aa).

Zn(2+) contacts are provided by Cys-60, Cys-62, Cys-75, and Cys-78. Mg(2+) is bound by residues Asp-535, Asp-537, and Asp-539. 4 residues coordinate Zn(2+): Cys-890, Cys-967, Cys-974, and Cys-977.

The protein belongs to the RNA polymerase beta' chain family. As to quaternary structure, the RNAP catalytic core consists of 2 alpha, 1 beta, 1 beta' and 1 omega subunit. When a sigma factor is associated with the core the holoenzyme is formed, which can initiate transcription. Mg(2+) is required as a cofactor. Zn(2+) serves as cofactor.

The enzyme catalyses RNA(n) + a ribonucleoside 5'-triphosphate = RNA(n+1) + diphosphate. DNA-dependent RNA polymerase catalyzes the transcription of DNA into RNA using the four ribonucleoside triphosphates as substrates. In Mycobacterium sp. (strain MCS), this protein is DNA-directed RNA polymerase subunit beta'.